The sequence spans 348 residues: 4-hydroxy-3-methylbut-2-enyl diphosphate reductase (348 aa).

C21 serves as a coordination point for [4Fe-4S] cluster. Residues H50 and H86 each coordinate (2E)-4-hydroxy-3-methylbut-2-enyl diphosphate. Positions 50 and 86 each coordinate dimethylallyl diphosphate. The isopentenyl diphosphate site is built by H50 and H86. C108 contacts [4Fe-4S] cluster. Residue H136 coordinates (2E)-4-hydroxy-3-methylbut-2-enyl diphosphate. H136 is a binding site for dimethylallyl diphosphate. H136 is a binding site for isopentenyl diphosphate. E138 serves as the catalytic Proton donor. (2E)-4-hydroxy-3-methylbut-2-enyl diphosphate is bound at residue T177. C207 serves as a coordination point for [4Fe-4S] cluster. (2E)-4-hydroxy-3-methylbut-2-enyl diphosphate-binding residues include S235, S236, N237, and S280. 4 residues coordinate dimethylallyl diphosphate: S235, S236, N237, and S280. 4 residues coordinate isopentenyl diphosphate: S235, S236, N237, and S280.

The protein belongs to the IspH family. The cofactor is [4Fe-4S] cluster.

The catalysed reaction is isopentenyl diphosphate + 2 oxidized [2Fe-2S]-[ferredoxin] + H2O = (2E)-4-hydroxy-3-methylbut-2-enyl diphosphate + 2 reduced [2Fe-2S]-[ferredoxin] + 2 H(+). It carries out the reaction dimethylallyl diphosphate + 2 oxidized [2Fe-2S]-[ferredoxin] + H2O = (2E)-4-hydroxy-3-methylbut-2-enyl diphosphate + 2 reduced [2Fe-2S]-[ferredoxin] + 2 H(+). Its pathway is isoprenoid biosynthesis; dimethylallyl diphosphate biosynthesis; dimethylallyl diphosphate from (2E)-4-hydroxy-3-methylbutenyl diphosphate: step 1/1. It functions in the pathway isoprenoid biosynthesis; isopentenyl diphosphate biosynthesis via DXP pathway; isopentenyl diphosphate from 1-deoxy-D-xylulose 5-phosphate: step 6/6. Its function is as follows. Catalyzes the conversion of 1-hydroxy-2-methyl-2-(E)-butenyl 4-diphosphate (HMBPP) into a mixture of isopentenyl diphosphate (IPP) and dimethylallyl diphosphate (DMAPP). Acts in the terminal step of the DOXP/MEP pathway for isoprenoid precursor biosynthesis. The polypeptide is 4-hydroxy-3-methylbut-2-enyl diphosphate reductase (Agrobacterium fabrum (strain C58 / ATCC 33970) (Agrobacterium tumefaciens (strain C58))).